The following is a 269-amino-acid chain: MDINVVITRCEDYTETLARNTRKVLPTIGRLLLISTFVEDGLRLLFNTHDHVNHFSYNWGLNYHFSLFLTIVMIINLLFGSLFVMMRYKVTESSAVLGFTIFAQVILYQLYTTYHLLTRNISIVAAIMLLVAENMLRKPKPANYTQLPRDEHEIEVTSVLLAACRVCLNLMLISMVHFDMSYTRILLCIISYGMMIFVWLGFKTRMMSFMLATWLFAYNIVLNDFWNKDAELHIIRYDFFQTLSAIGGLLLLIHTGPGEFSFDELKKKW.

5 helical membrane-spanning segments follow: residues 65 to 85, 156 to 176, 182 to 202, 206 to 226, and 242 to 262; these read FSLF…LFVM, VTSV…ISMV, YTRI…WLGF, MMSF…NDFW, and TLSA…EFSF. The short motif at 266 to 269 is the Di-lysine motif element; that stretch reads KKKW.

This sequence belongs to the SURF4 family.

The protein resides in the membrane. This is an uncharacterized protein from Caenorhabditis elegans.